A 242-amino-acid polypeptide reads, in one-letter code: Adenosine 5'-phosphosulfate reductase (242 aa).

Residues cysteine 125, cysteine 126, cysteine 208, and cysteine 211 each coordinate [4Fe-4S] cluster. The Nucleophile; cysteine thiosulfonate intermediate role is filled by cysteine 234.

This sequence belongs to the PAPS reductase family. CysH subfamily. The cofactor is [4Fe-4S] cluster.

It is found in the cytoplasm. The enzyme catalyses [thioredoxin]-disulfide + sulfite + AMP + 2 H(+) = adenosine 5'-phosphosulfate + [thioredoxin]-dithiol. Its pathway is sulfur metabolism; hydrogen sulfide biosynthesis; sulfite from sulfate. Functionally, catalyzes the formation of sulfite from adenosine 5'-phosphosulfate (APS) using thioredoxin as an electron donor. This chain is Adenosine 5'-phosphosulfate reductase, found in Staphylococcus saprophyticus subsp. saprophyticus (strain ATCC 15305 / DSM 20229 / NCIMB 8711 / NCTC 7292 / S-41).